Here is a 907-residue protein sequence, read N- to C-terminus: TBC1 domain family member 30 (907 aa).

The segment at 51 to 74 (ASETQDNGNKSGGDEIDVSLCDSQ) is disordered. The region spanning 243–451 (GIPKEWRKRV…KIWDSVFFEG (209 aa)) is the Rab-GAP TBC domain. Positions 583–645 (QKQIKDQKEE…QQYSRIKKRQ (63 aa)) form a coiled coil. Disordered stretches follow at residues 731–781 (AKGE…LDRT), 812–859 (ELSP…SPFP), and 872–907 (NLGL…SKKR). Residues 749-762 (EVPKDQPDTSKETE) show a composition bias toward basic and acidic residues. Residues 831–843 (ESQSDSHSSSSES) are compositionally biased toward low complexity. Over residues 892 to 907 (KTFNKAANGTTGSKKR) the composition is skewed to polar residues.

In terms of biological role, may act as a GTPase-activating protein for Rab family protein(s). The polypeptide is TBC1 domain family member 30 (tbc1d30) (Xenopus tropicalis (Western clawed frog)).